Consider the following 400-residue polypeptide: Telomere repeat-binding protein 6 (400 aa).

Residues 173 to 252 form the Ubiquitin-like domain; sequence VKFGIKSLNI…DDENLGSLGF (80 aa). The HTH myb-type domain occupies 310–369; it reads VQRRIRRPFTVSEVEALVQAVERLGTGRWRDVKSHAFNHVNHRTYVDLKDKWKTLVHTAK. Residues 338–365 constitute a DNA-binding region (H-T-H motif); it reads WRDVKSHAFNHVNHRTYVDLKDKWKTLV.

As to quaternary structure, homodimer. In terms of tissue distribution, expressed ubiquitously.

It is found in the nucleus. Its function is as follows. Binds specifically to the plant telomeric double-stranded DNA sequences. At least 4 repeats of telomeric sequences are required for binding. The chain is Telomere repeat-binding protein 6 (TRP6) from Arabidopsis thaliana (Mouse-ear cress).